Reading from the N-terminus, the 432-residue chain is Metacaspase-1 (432 aa).

Residues 1-11 are compositionally biased toward basic residues; sequence MEVMDHHHHTS. Disordered regions lie at residues 1–21 and 41–87; these read MEVMDHHHHTSSTRPNPTTRR and PQPG…PNAP. A compositionally biased stretch (low complexity) spans 12 to 21; that stretch reads STRPNPTTRR. The span at 46 to 74 shows a compositional bias: pro residues; that stretch reads GAPPPQGGYGYPQPPPPQQPYGYSQPPPQ. Residues H223 and C279 contribute to the active site.

It belongs to the peptidase C14B family.

Its function is as follows. Involved in cell death (apoptosis). This Sclerotinia sclerotiorum (strain ATCC 18683 / 1980 / Ss-1) (White mold) protein is Metacaspase-1 (casA).